Here is a 247-residue protein sequence, read N- to C-terminus: 7-cyano-7-deazaguanine synthase (247 aa).

Position 21–31 (Phe-21–Leu-31) interacts with ATP. Residues Cys-209, Cys-224, Cys-227, and Cys-230 each contribute to the Zn(2+) site.

Belongs to the QueC family. It depends on Zn(2+) as a cofactor.

It catalyses the reaction 7-carboxy-7-deazaguanine + NH4(+) + ATP = 7-cyano-7-deazaguanine + ADP + phosphate + H2O + H(+). It functions in the pathway purine metabolism; 7-cyano-7-deazaguanine biosynthesis. Functionally, catalyzes the ATP-dependent conversion of 7-carboxy-7-deazaguanine (CDG) to 7-cyano-7-deazaguanine (preQ(0)). The sequence is that of 7-cyano-7-deazaguanine synthase from Halorhodospira halophila (strain DSM 244 / SL1) (Ectothiorhodospira halophila (strain DSM 244 / SL1)).